The following is a 320-amino-acid chain: Nicotianamine synthase 2 (320 aa).

The protein belongs to the nicotianamine synthase (NAS)-like family.

The enzyme catalyses 3 S-adenosyl-L-methionine = nicotianamine + 3 S-methyl-5'-thioadenosine + 3 H(+). In terms of biological role, synthesizes nicotianamine, a polyamine which serves as a sensor for the physiological iron status within the plant, and/or might be involved in the transport of iron. This chain is Nicotianamine synthase 2 (NAS2), found in Arabidopsis thaliana (Mouse-ear cress).